Reading from the N-terminus, the 68-residue chain is Large ribosomal subunit protein bL35 (68 aa).

Residues Gly-29–Val-68 are disordered. Over residues Asn-35 to Arg-47 the composition is skewed to basic residues.

This sequence belongs to the bacterial ribosomal protein bL35 family.

This Sulfurihydrogenibium sp. (strain YO3AOP1) protein is Large ribosomal subunit protein bL35.